The primary structure comprises 1930 residues: Myosin-16 (1930 aa).

One can recognise a Myosin N-terminal SH3-like domain in the interval 35 to 84 (DIKKSCWVKDEKEGFIAGEIQSEQGDQVTVKTVNNQTVTVKKDDVQQMNP). One can recognise a Myosin motor domain in the interval 88 to 774 (YQASDMADMT…ILAKLEDMRD (687 aa)). 181 to 188 (GESGAGKT) lines the ATP pocket. Actin-binding regions lie at residues 652 to 674 (LNKL…VPNE) and 753 to 767 (KIGH…GILA). Residues 777–806 (LAKIMTMLQCRLRGFLMRIEFKKMLERRIG) form the IQ domain. Residues 835–1921 (LLNVARQEEE…ALNKLRTRHR (1087 aa)) adopt a coiled-coil conformation. Positions 1116–1137 (EELEAERSMRAKVEKQRSDLSR) are disordered. Basic and acidic residues predominate over residues 1120–1137 (AERSMRAKVEKQRSDLSR).

This sequence belongs to the TRAFAC class myosin-kinesin ATPase superfamily. Myosin family.

Its subcellular location is the cytoplasm. It localises to the myofibril. In terms of biological role, may play a role in masticatory muscles contraction. This Canis lupus familiaris (Dog) protein is Myosin-16.